The following is a 364-amino-acid chain: Paraneoplastic antigen Ma2 homolog (364 aa).

Ala-2 is subject to N-acetylalanine. The segment covering 335–353 has biased composition (acidic residues); the sequence is EEEEASFENESIEEPEEGD. The tract at residues 335-364 is disordered; it reads EEEEASFENESIEEPEEGDGYGGWNHEGDD. Positions 354-364 are enriched in gly residues; sequence GYGGWNHEGDD.

Belongs to the PNMA family.

It localises to the nucleus. Its subcellular location is the nucleolus. This Macaca fascicularis (Crab-eating macaque) protein is Paraneoplastic antigen Ma2 homolog (PNMA2).